We begin with the raw amino-acid sequence, 306 residues long: Aspartate carbamoyltransferase catalytic subunit (306 aa).

Residues R55 and T56 each contribute to the carbamoyl phosphate site. K85 is an L-aspartate binding site. Residues R106, H133, and Q136 each coordinate carbamoyl phosphate. The L-aspartate site is built by R166 and R228. L264 and P265 together coordinate carbamoyl phosphate.

Belongs to the aspartate/ornithine carbamoyltransferase superfamily. ATCase family. In terms of assembly, heterododecamer (2C3:3R2) of six catalytic PyrB chains organized as two trimers (C3), and six regulatory PyrI chains organized as three dimers (R2).

It catalyses the reaction carbamoyl phosphate + L-aspartate = N-carbamoyl-L-aspartate + phosphate + H(+). It functions in the pathway pyrimidine metabolism; UMP biosynthesis via de novo pathway; (S)-dihydroorotate from bicarbonate: step 2/3. In terms of biological role, catalyzes the condensation of carbamoyl phosphate and aspartate to form carbamoyl aspartate and inorganic phosphate, the committed step in the de novo pyrimidine nucleotide biosynthesis pathway. The polypeptide is Aspartate carbamoyltransferase catalytic subunit (Serratia marcescens).